A 606-amino-acid chain; its full sequence is DNA mismatch repair protein MutL (606 aa).

The segment at 350-371 is disordered; that stretch reads GWRPSAPSAPWTPEASPSRPYQ.

This sequence belongs to the DNA mismatch repair MutL/HexB family.

Its function is as follows. This protein is involved in the repair of mismatches in DNA. It is required for dam-dependent methyl-directed DNA mismatch repair. May act as a 'molecular matchmaker', a protein that promotes the formation of a stable complex between two or more DNA-binding proteins in an ATP-dependent manner without itself being part of a final effector complex. The protein is DNA mismatch repair protein MutL of Rhizobium rhizogenes (strain K84 / ATCC BAA-868) (Agrobacterium radiobacter).